Consider the following 144-residue polypeptide: NADPH-dependent 7-cyano-7-deazaguanine reductase (144 aa).

Positions 1 to 21 (MSQSPIQNPTSDPNAQSVQET) are enriched in polar residues. The tract at residues 1–27 (MSQSPIQNPTSDPNAQSVQETSESKYG) is disordered. Cys61 (thioimide intermediate) is an active-site residue. The active-site Proton donor is Asp68. Residues 83 to 85 (VEL) and 102 to 103 (HE) each bind substrate.

The protein belongs to the GTP cyclohydrolase I family. QueF type 1 subfamily.

The protein localises to the cytoplasm. The enzyme catalyses 7-aminomethyl-7-carbaguanine + 2 NADP(+) = 7-cyano-7-deazaguanine + 2 NADPH + 3 H(+). The protein operates within tRNA modification; tRNA-queuosine biosynthesis. Functionally, catalyzes the NADPH-dependent reduction of 7-cyano-7-deazaguanine (preQ0) to 7-aminomethyl-7-deazaguanine (preQ1). The chain is NADPH-dependent 7-cyano-7-deazaguanine reductase from Acaryochloris marina (strain MBIC 11017).